Here is a 626-residue protein sequence, read N- to C-terminus: Dual specificity testis-specific protein kinase 1 (626 aa).

A disordered region spans residues 1-41 (MAGERPPLRGPGPGPGEVPGEGPPGPGGTGGGPGRGRPSSY). Residues 8–26 (LRGPGPGPGEVPGEGPPGP) show a composition bias toward pro residues. The region spanning 57–314 (FHCAEKIGAG…TEITQHLEWI (258 aa)) is the Protein kinase domain. ATP contacts are provided by residues 63-71 (IGAGFFSEV) and Lys-86. Asp-175 serves as the catalytic Proton acceptor. Ser-220 bears the Phosphoserine; by autocatalysis mark. Disordered stretches follow at residues 331–373 (HNQG…NWGD), 423–488 (ETLV…QLPL), and 529–564 (WAGE…EPDE). Residue Arg-338 is modified to Omega-N-methylarginine. Residues 348–357 (PDPRLSRSRS) are compositionally biased toward basic and acidic residues. The required for interaction with YWHAB stretch occupies residues 419-524 (VTTPETLVQP…NNNPPAVVVN (106 aa)). The segment covering 476-485 (EPEPPGPAPQ) has biased composition (pro residues). The segment at 527–624 (QGWAGEPWNR…PTPSLQLPGA (98 aa)) is required for interaction with PARVA. Residues 527–626 (QGWAGEPWNR…PSLQLPGARS (100 aa)) are required for interaction with SPRED1 and SPRY2. Required for TESK1-mediated dephosphorylation of SPRY2 and SPRY2 inhibition of ERK phosphorylation.

The protein belongs to the protein kinase superfamily. TKL Ser/Thr protein kinase family. Interacts (via both C- and N-termini) with SPRY4 (via C-terminus); the interaction inhibits TESK1 kinase activity. Interacts with TAOK1; the interaction inhibits TAOK1 kinase activity. Interacts (via C-terminus) with SPRED1 (via C-terminus); the interaction inhibits TESK1 kinase activity. Interacts (via C-terminus) with PARVA/PARVIN (via C-terminus); the interaction inhibits TESK1 kinase activity. Interacts with YWHAB/14-3-3 beta; the interaction is dependent on the phosphorylation of TESK1 Ser-437 and inhibits TESK1 kinase activity. Interacts with SPRY1, SPRY3 and SPRED2. Interacts (via C-terminus) with SPRY2 (via C-terminus); the interaction disrupts SPRY2 interaction with PPP2CA/PP2A-C, possibly by vesicular sequestration of SPRY2. Therefore dephosphorylation of SPRY2 by the serine/threonine-protein phosphatase 2A (PP2A) holoenzyme is lost, inhibiting its interaction with GRB2. Mg(2+) serves as cofactor. It depends on Mn(2+) as a cofactor. Post-translationally, autophosphorylated on serine and tyrosine residues. As to expression, expressed in podocytes and renal tubular cells in the kidney (at protein level).

It localises to the cytoplasm. The protein localises to the perinuclear region. It is found in the cytoskeleton. The protein resides in the microtubule organizing center. Its subcellular location is the centrosome. It localises to the cell projection. The protein localises to the lamellipodium. It carries out the reaction L-seryl-[protein] + ATP = O-phospho-L-seryl-[protein] + ADP + H(+). It catalyses the reaction L-threonyl-[protein] + ATP = O-phospho-L-threonyl-[protein] + ADP + H(+). The enzyme catalyses L-tyrosyl-[protein] + ATP = O-phospho-L-tyrosyl-[protein] + ADP + H(+). With respect to regulation, activated by autophosphorylation on Ser-220. Kinase activity is inhibited by SPRED1. Dual specificity protein kinase activity catalyzing autophosphorylation and phosphorylation of exogenous substrates on both serine/threonine and tyrosine residues. Regulates the cellular cytoskeleton by enhancing actin stress fiber formation via phosphorylation of cofilin and by preventing microtubule breakdown via inhibition of TAOK1/MARKK kinase activity. Inhibits podocyte motility via regulation of actin cytoskeletal dynamics and phosphorylation of CFL1. Positively regulates integrin-mediated cell spreading, via phosphorylation of cofilin. Suppresses ciliogenesis via multiple pathways; phosphorylation of CFL1, suppression of ciliary vesicle directional trafficking to the ciliary base, and by facilitating YAP1 nuclear localization where it acts as a transcriptional corepressor of the TEAD4 target genes AURKA and PLK1. Probably plays a central role at and after the meiotic phase of spermatogenesis. In Homo sapiens (Human), this protein is Dual specificity testis-specific protein kinase 1 (TESK1).